A 371-amino-acid chain; its full sequence is DNA primase DnaG (371 aa).

Residues 173–248 form the Toprim domain; that stretch reads DEIILVEGRA…DIDYVAVAPP (76 aa). Glutamate 179, aspartate 221, and aspartate 223 together coordinate Mg(2+).

This sequence belongs to the archaeal DnaG primase family. In terms of assembly, forms a ternary complex with MCM helicase and DNA. Component of the archaeal exosome complex. Mg(2+) is required as a cofactor.

The catalysed reaction is ssDNA + n NTP = ssDNA/pppN(pN)n-1 hybrid + (n-1) diphosphate.. RNA polymerase that catalyzes the synthesis of short RNA molecules used as primers for DNA polymerase during DNA replication. Also part of the exosome, which is a complex involved in RNA degradation. Acts as a poly(A)-binding protein that enhances the interaction between heteromeric, adenine-rich transcripts and the exosome. This is DNA primase DnaG from Nanoarchaeum equitans (strain Kin4-M).